We begin with the raw amino-acid sequence, 94 residues long: Small ribosomal subunit protein uS19 (94 aa).

This sequence belongs to the universal ribosomal protein uS19 family.

Protein S19 forms a complex with S13 that binds strongly to the 16S ribosomal RNA. In Clostridium botulinum (strain Hall / ATCC 3502 / NCTC 13319 / Type A), this protein is Small ribosomal subunit protein uS19.